A 235-amino-acid polypeptide reads, in one-letter code: Large ribosomal subunit protein uL1 (235 aa).

The protein belongs to the universal ribosomal protein uL1 family. Part of the 50S ribosomal subunit.

Binds directly to 23S rRNA. The L1 stalk is quite mobile in the ribosome, and is involved in E site tRNA release. In terms of biological role, protein L1 is also a translational repressor protein, it controls the translation of the L11 operon by binding to its mRNA. The protein is Large ribosomal subunit protein uL1 of Solidesulfovibrio magneticus (strain ATCC 700980 / DSM 13731 / RS-1) (Desulfovibrio magneticus).